The sequence spans 321 residues: UDP-3-O-acylglucosamine N-acyltransferase (321 aa).

His231 functions as the Proton acceptor in the catalytic mechanism.

This sequence belongs to the transferase hexapeptide repeat family. LpxD subfamily. Homotrimer.

It carries out the reaction a UDP-3-O-[(3R)-3-hydroxyacyl]-alpha-D-glucosamine + a (3R)-hydroxyacyl-[ACP] = a UDP-2-N,3-O-bis[(3R)-3-hydroxyacyl]-alpha-D-glucosamine + holo-[ACP] + H(+). Its pathway is bacterial outer membrane biogenesis; LPS lipid A biosynthesis. In terms of biological role, catalyzes the N-acylation of UDP-3-O-acylglucosamine using 3-hydroxyacyl-ACP as the acyl donor. Is involved in the biosynthesis of lipid A, a phosphorylated glycolipid that anchors the lipopolysaccharide to the outer membrane of the cell. The polypeptide is UDP-3-O-acylglucosamine N-acyltransferase (Campylobacter jejuni subsp. jejuni serotype O:2 (strain ATCC 700819 / NCTC 11168)).